Consider the following 373-residue polypeptide: MATQAHSLSYAGCNFLRQRLVLSTLSGRPVKIRKIRARDDNPGLRDFEASFIRLLDKITNGSRIEINQTGTTLYYQPGLLYGGSVEHDCSVLRGIGYYLESLLCLAPFMKHPLKIVLRGVTNDQVDPSVDVLKATALPLLKQFGIDGESFELKIVRRGMPPGGGGEVVFSCPVRKVLKPIQLTDPGKIKRIRGMAYSVRVSPQMANRIVDSARSILNKFIPDIYIYTDHMKGVNSGKSPGFGLSLVAETTSGTFLSAELASNPQGQGAAVLPEDLGRNCARLLLEEIYRGGCVDSTNQSLALLLMTLGQQDVSKVLLGPLSPYTIEFLRHLKSFFQIMFKIETKPCGEELKGGDKVLMTCVGIGFSNLSKTLK.

The protein belongs to the RNA 3'-terminal cyclase family. Type 2 subfamily. As to quaternary structure, part of the small subunit (SSU) processome, composed of more than 70 proteins and the RNA chaperone small nucleolar RNA (snoRNA) U3. Interacts with BMS1.

The protein localises to the nucleus. It is found in the nucleolus. Functionally, as part of the small subunit (SSU) processome, it plays a role in 40S-ribosomal-subunit biogenesis in the early pre-rRNA processing steps at sites A0, A1 and A2 that are required for proper maturation of the 18S RNA. Activates BMS1 by promoting GDP/GTP exchange. Does not have cyclase activity. This Homo sapiens (Human) protein is RNA 3'-terminal phosphate cyclase-like protein.